The following is a 167-amino-acid chain: Cytochrome c-type biogenesis protein CcmE (167 aa).

Over 1–7 (MTRKQRR) the chain is Cytoplasmic. A helical; Signal-anchor for type II membrane protein membrane pass occupies residues 8–28 (LLMIGGAGVVLIVAVGLVLNA). The Periplasmic portion of the chain corresponds to 29–167 (LRDSIVFFST…TSANAAEGGK (139 aa)). Positions 122 and 126 each coordinate heme. Over residues 137 to 150 (KDGHWKDDYGKKSP) the composition is skewed to basic and acidic residues. The interval 137 to 167 (KDGHWKDDYGKKSPGETTAGQTSANAAEGGK) is disordered. Residues 151–161 (GETTAGQTSAN) are compositionally biased toward polar residues.

It belongs to the CcmE/CycJ family.

The protein resides in the cell inner membrane. Heme chaperone required for the biogenesis of c-type cytochromes. Transiently binds heme delivered by CcmC and transfers the heme to apo-cytochromes in a process facilitated by CcmF and CcmH. This Rhodopseudomonas palustris (strain ATCC BAA-98 / CGA009) protein is Cytochrome c-type biogenesis protein CcmE.